The primary structure comprises 445 residues: Tubby-like F-box protein 14 (445 aa).

Residues 56-114 form the F-box domain; it reads SSCWANLPPELLRDVIERLEASEAAWPSRKNVVACAAVCRTWRDMCREIVKNPEFCGKI.

This sequence belongs to the TUB family. Ubiquitous.

The chain is Tubby-like F-box protein 14 (TULP14) from Oryza sativa subsp. japonica (Rice).